The sequence spans 88 residues: Small ribosomal subunit protein bS18A (88 aa).

The protein belongs to the bacterial ribosomal protein bS18 family. As to quaternary structure, part of the 30S ribosomal subunit. Forms a tight heterodimer with protein bS6.

In terms of biological role, binds as a heterodimer with protein bS6 to the central domain of the 16S rRNA, where it helps stabilize the platform of the 30S subunit. This Roseiflexus sp. (strain RS-1) protein is Small ribosomal subunit protein bS18A.